Here is a 416-residue protein sequence, read N- to C-terminus: Tyrosine--tRNA ligase (416 aa).

Tyrosine 34 is a binding site for L-tyrosine. Residues 39–48 (PTGDSLHIGH) carry the 'HIGH' region motif. The L-tyrosine site is built by tyrosine 165 and glutamine 169. Residues 227–231 (KFGKT) carry the 'KMSKS' region motif. Lysine 230 is an ATP binding site. Residues 349-416 (ENIIIWLTDN…KKHYYLARVK (68 aa)) enclose the S4 RNA-binding domain.

This sequence belongs to the class-I aminoacyl-tRNA synthetase family. TyrS type 1 subfamily. As to quaternary structure, homodimer.

The protein localises to the cytoplasm. It catalyses the reaction tRNA(Tyr) + L-tyrosine + ATP = L-tyrosyl-tRNA(Tyr) + AMP + diphosphate + H(+). Its function is as follows. Catalyzes the attachment of tyrosine to tRNA(Tyr) in a two-step reaction: tyrosine is first activated by ATP to form Tyr-AMP and then transferred to the acceptor end of tRNA(Tyr). The protein is Tyrosine--tRNA ligase of Limosilactobacillus reuteri (strain DSM 20016) (Lactobacillus reuteri).